The chain runs to 280 residues: Large ribosomal subunit protein uL2 (280 aa).

Disordered stretches follow at residues methionine 1–methionine 20, proline 29–histidine 58, and valine 225–arginine 280. The segment covering serine 45–histidine 58 has biased composition (basic residues). Over residues lysine 253–valine 269 the composition is skewed to basic and acidic residues. A compositionally biased stretch (basic residues) spans arginine 270–arginine 280.

Belongs to the universal ribosomal protein uL2 family. In terms of assembly, part of the 50S ribosomal subunit. Forms a bridge to the 30S subunit in the 70S ribosome.

In terms of biological role, one of the primary rRNA binding proteins. Required for association of the 30S and 50S subunits to form the 70S ribosome, for tRNA binding and peptide bond formation. It has been suggested to have peptidyltransferase activity; this is somewhat controversial. Makes several contacts with the 16S rRNA in the 70S ribosome. In Corynebacterium efficiens (strain DSM 44549 / YS-314 / AJ 12310 / JCM 11189 / NBRC 100395), this protein is Large ribosomal subunit protein uL2.